A 266-amino-acid polypeptide reads, in one-letter code: Zinc finger protein CG30 (266 aa).

The segment at 8-63 adopts an RING-type zinc-finger fold; sequence CNICFSVAEIKNYFMQPIDRLTMIPVLELDTCKHQLCSMCIRKIRKRKKTPCPLCR.

Its subcellular location is the host nucleus. Plays a role in the proper expression of late and very late genes. This chain is Zinc finger protein CG30 (CG30), found in Bombyx mori nuclear polyhedrosis virus (BmNPV).